The primary structure comprises 227 residues: MVLVRGGYKLEKFLQLLTVLLQEAKDPASLLKRLLTILVAVIIFLFVSNTSEVMSFLKTFSTSAVLQDVQTQRIDNFPNVAREKSMVLFSQTGADAVFVVKYKPDAINDYSNIIAWESNAQLDRADLADKAVNKTSELYRRHLEGFNYASDLTVKVNKYMGKNIPSFKNVIFNYIYTCPYFNLNNIYAGYIGIAWRDKPVDIADSEQFKEYLTKLCSPQQRSLGRSI.

Residues 1–33 (MVLVRGGYKLEKFLQLLTVLLQEAKDPASLLKR) lie on the Cytoplasmic side of the membrane. A helical; Signal-anchor for type II membrane protein membrane pass occupies residues 34–48 (LLTILVAVIIFLFVS). Topologically, residues 49–227 (NTSEVMSFLK…PQQRSLGRSI (179 aa)) are periplasmic. Cysteine 178 and cysteine 216 are disulfide-bonded.

Belongs to the T4likevirus holin family. Homomultimer. Heterotetramer composed of 2 holin and 2 antiholin. The holin-antiholin complex binds dsDNA. Interacts (via C-terminus) with antiholin (via C-terminus); this interaction blocks the holin homomultimerization and delays host cell lysis. Interacts (via N-terminus) with the lysis inhibition accessory protein rIII; this interaction stabilizes the holin-antiholin complex thereby resulting in a robust block of the hole formation. Disulfide bond is required for functionality.

Its subcellular location is the host cell inner membrane. In terms of biological role, accumulates harmlessly in the cytoplasmic membrane until it reaches a critical concentration that triggers the formation of micron-scale pores (holes) causing host cell membrane disruption and endolysin escape into the periplasmic space. Determines the precise timing of host cell lysis. Regulated by specific antiholins that somehow sense superinfections and then delay lysis. Participates with the endolysin and spanin proteins in the sequential events which lead to the programmed host cell lysis releasing the mature viral particles from the host cell. In Escherichia phage T5 (Enterobacteria phage T5), this protein is Holin.